The following is a 415-amino-acid chain: Probable glucuronosyltransferase Os01g0926600 (415 aa).

Residues 1-4 lie on the Cytoplasmic side of the membrane; that stretch reads MAMR. Residues 5–25 form a helical; Signal-anchor for type II membrane protein membrane-spanning segment; sequence LSSAAVALALLLAATALEDVA. At 26–415 the chain is on the lumenal side; it reads RGQDTERIEG…QGPVGDLKPW (390 aa). Residues N142 and N403 are each glycosylated (N-linked (GlcNAc...) asparagine).

The protein belongs to the glycosyltransferase 47 family.

The protein resides in the golgi apparatus membrane. Its function is as follows. Involved in the synthesis of glucuronoxylan hemicellulose in secondary cell walls. This chain is Probable glucuronosyltransferase Os01g0926600, found in Oryza sativa subsp. japonica (Rice).